The following is a 436-amino-acid chain: 3-ketoacyl-CoA thiolase (436 aa).

Catalysis depends on Cys-99, which acts as the Acyl-thioester intermediate. Catalysis depends on proton acceptor residues His-392 and Cys-422.

It belongs to the thiolase-like superfamily. Thiolase family. As to quaternary structure, heterotetramer of two alpha chains (FadJ) and two beta chains (FadI).

It is found in the cytoplasm. The enzyme catalyses an acyl-CoA + acetyl-CoA = a 3-oxoacyl-CoA + CoA. It functions in the pathway lipid metabolism; fatty acid beta-oxidation. Functionally, catalyzes the final step of fatty acid oxidation in which acetyl-CoA is released and the CoA ester of a fatty acid two carbons shorter is formed. The polypeptide is 3-ketoacyl-CoA thiolase (Klebsiella pneumoniae (strain 342)).